A 392-amino-acid polypeptide reads, in one-letter code: Leucine aminopeptidase 1 (392 aa).

An N-terminal signal peptide occupies residues 1-18 (MKFSQASLLAACLPAISA). The propeptide occupies 19–82 (RFIETAEADN…LGSTRLNAQT (64 aa)). A glycan (N-linked (GlcNAc...) asparagine) is linked at N174. The Zn(2+) site is built by H182, D201, E240, and D267. C316 and C320 are joined by a disulfide. Zn(2+) is bound at residue H349.

It belongs to the peptidase M28 family. M28E subfamily. Monomer. Requires Zn(2+) as cofactor.

It localises to the secreted. Extracellular aminopeptidase that allows assimilation of proteinaceous substrates. This chain is Leucine aminopeptidase 1 (LAP1), found in Fusarium vanettenii (strain ATCC MYA-4622 / CBS 123669 / FGSC 9596 / NRRL 45880 / 77-13-4) (Fusarium solani subsp. pisi).